A 488-amino-acid polypeptide reads, in one-letter code: Ammonium transporter 1 member 1 (488 aa).

11 helical membrane-spanning segments follow: residues 47–69 (TYLLFSAYLVFSMQLGFAMLLAG), 90–109 (LFYYLFGFAFALGGPSNGFI), 129–148 (FLYQWAFAIAAAGITSGSIA), 153–175 (FVAYLIYSSFLTGFVYPVVSHWF), 195–217 (VIDFAGSGVVHMVGGIAGFYGAL), 238–257 (HSASLVVLGTFLLWFGWYGF), 281–303 (AVGRTAVTTTLAGCTAALTTLFG), 316–333 (VCNGLLGGFAAITAGCSV), 337–356 (WAAIICGFVAALVLIGFNML), 368–387 (AAQLHGGCGAWGIIFTGLFA), and 418–440 (HIIQILVIIGWVSATMGPLFYIL).

Belongs to the ammonia transporter channel (TC 1.A.11.2) family. As to expression, root hairs and leaves.

It is found in the membrane. Functionally, ammonium transporter that may be involved in ammonium uptake from the soil. This chain is Ammonium transporter 1 member 1 (AMT1-1), found in Solanum lycopersicum (Tomato).